A 298-amino-acid chain; its full sequence is Specificity protein transcription factor 1 (298 aa).

A compositionally biased stretch (low complexity) spans 206–218 (VSSGSESVSARGT). Residues 206 to 233 (VSSGSESVSARGTSGSGGTGKYPSSRTA) are disordered. The segment at 260–284 (HNCHIAGCGKVYNKSSHLKAHLRWH) adopts a C2H2-type zinc-finger fold.

It belongs to the Sp1 C2H2-type zinc-finger protein family. Expressed in ASJ sensory neurons, pharyngeal cells, rectal cells, intestine, seam cells, and vulval cells.

Functionally, probable transcription factor which modulates gene expression, thereby acting as an ASJ sensory neuron terminal selector gene. This Caenorhabditis elegans protein is Specificity protein transcription factor 1.